A 505-amino-acid polypeptide reads, in one-letter code: ATP synthase subunit alpha (505 aa).

The tract at residues 118–138 (VDGLGPINTTNTRPIESPAPG) is disordered. 172-179 (GDRQTGKT) is an ATP binding site.

This sequence belongs to the ATPase alpha/beta chains family. As to quaternary structure, F-type ATPases have 2 components, CF(1) - the catalytic core - and CF(0) - the membrane proton channel. CF(1) has five subunits: alpha(3), beta(3), gamma(1), delta(1), epsilon(1). CF(0) has three main subunits: a(1), b(2) and c(9-12). The alpha and beta chains form an alternating ring which encloses part of the gamma chain. CF(1) is attached to CF(0) by a central stalk formed by the gamma and epsilon chains, while a peripheral stalk is formed by the delta and b chains.

Its subcellular location is the cell membrane. The catalysed reaction is ATP + H2O + 4 H(+)(in) = ADP + phosphate + 5 H(+)(out). Produces ATP from ADP in the presence of a proton gradient across the membrane. The alpha chain is a regulatory subunit. This is ATP synthase subunit alpha from Bacillus cereus (strain ATCC 14579 / DSM 31 / CCUG 7414 / JCM 2152 / NBRC 15305 / NCIMB 9373 / NCTC 2599 / NRRL B-3711).